An 806-amino-acid polypeptide reads, in one-letter code: DNA topoisomerase 4 subunit A (806 aa).

Residues 33-499 enclose the Topo IIA-type catalytic domain; it reads LPDARDGLKP…EEIKINLEVM (467 aa). The O-(5'-phospho-DNA)-tyrosine intermediate role is filled by Tyr-121.

Belongs to the type II topoisomerase GyrA/ParC subunit family. ParC type 2 subfamily. In terms of assembly, heterotetramer composed of ParC and ParE.

The protein localises to the cell membrane. The protein resides in the cytoplasm. The enzyme catalyses ATP-dependent breakage, passage and rejoining of double-stranded DNA.. In terms of biological role, topoisomerase IV is essential for chromosome segregation. It relaxes supercoiled DNA. Performs the decatenation events required during the replication of a circular DNA molecule. This chain is DNA topoisomerase 4 subunit A, found in Bacillus subtilis (strain 168).